Here is a 292-residue protein sequence, read N- to C-terminus: 33 kDa chaperonin (292 aa).

Disulfide bonds link C237/C239 and C270/C273.

This sequence belongs to the HSP33 family. Under oxidizing conditions two disulfide bonds are formed involving the reactive cysteines. Under reducing conditions zinc is bound to the reactive cysteines and the protein is inactive.

It is found in the cytoplasm. Its function is as follows. Redox regulated molecular chaperone. Protects both thermally unfolding and oxidatively damaged proteins from irreversible aggregation. Plays an important role in the bacterial defense system toward oxidative stress. The polypeptide is 33 kDa chaperonin (Lachnoclostridium phytofermentans (strain ATCC 700394 / DSM 18823 / ISDg) (Clostridium phytofermentans)).